The chain runs to 68 residues: Conotoxin Em11.5 (68 aa).

The signal sequence occupies residues 1 to 26; that stretch reads MMFRLTSVGCFLLVIACLNLFQVVLT. 4 cysteine pairs are disulfide-bonded: Cys-29/Cys-43, Cys-36/Cys-48, Cys-42/Cys-52, and Cys-47/Cys-56. At Phe-60 the chain carries Phenylalanine amide. The propeptide occupies 64–68; that stretch reads ATFQE.

This sequence belongs to the conotoxin I2 superfamily. In terms of tissue distribution, expressed by the venom duct.

It localises to the secreted. This chain is Conotoxin Em11.5, found in Conus emaciatus (False virgin cone).